The sequence spans 275 residues: 3-methyl-2-oxobutanoate hydroxymethyltransferase (275 aa).

Asp49 and Asp88 together coordinate Mg(2+). 3-methyl-2-oxobutanoate is bound by residues 49-50, Asp88, and Lys118; that span reads DS. Glu120 provides a ligand contact to Mg(2+). Glu187 functions as the Proton acceptor in the catalytic mechanism.

The protein belongs to the PanB family. Homodecamer; pentamer of dimers. Requires Mg(2+) as cofactor.

It is found in the cytoplasm. It catalyses the reaction 3-methyl-2-oxobutanoate + (6R)-5,10-methylene-5,6,7,8-tetrahydrofolate + H2O = 2-dehydropantoate + (6S)-5,6,7,8-tetrahydrofolate. It participates in cofactor biosynthesis; (R)-pantothenate biosynthesis; (R)-pantoate from 3-methyl-2-oxobutanoate: step 1/2. Functionally, catalyzes the reversible reaction in which hydroxymethyl group from 5,10-methylenetetrahydrofolate is transferred onto alpha-ketoisovalerate to form ketopantoate. The chain is 3-methyl-2-oxobutanoate hydroxymethyltransferase from Bordetella petrii (strain ATCC BAA-461 / DSM 12804 / CCUG 43448).